The following is a 243-amino-acid chain: Carboxy-S-adenosyl-L-methionine synthase (243 aa).

Residues Tyr-40, 65-67 (GCS), 90-91 (DN), 118-119 (DI), Asn-133, and Arg-200 contribute to the S-adenosyl-L-methionine site.

Belongs to the class I-like SAM-binding methyltransferase superfamily. Cx-SAM synthase family. Homodimer.

The catalysed reaction is prephenate + S-adenosyl-L-methionine = carboxy-S-adenosyl-L-methionine + 3-phenylpyruvate + H2O. Catalyzes the conversion of S-adenosyl-L-methionine (SAM) to carboxy-S-adenosyl-L-methionine (Cx-SAM). The polypeptide is Carboxy-S-adenosyl-L-methionine synthase (Shewanella sp. (strain W3-18-1)).